The sequence spans 241 residues: Probable phosphatase Cthe_0111 (241 aa).

Zn(2+) is bound by residues His8, His10, His16, His41, Glu74, His102, His132, Asp192, and His194.

This sequence belongs to the PHP family. Zn(2+) serves as cofactor.

This Acetivibrio thermocellus (strain ATCC 27405 / DSM 1237 / JCM 9322 / NBRC 103400 / NCIMB 10682 / NRRL B-4536 / VPI 7372) (Clostridium thermocellum) protein is Probable phosphatase Cthe_0111.